A 195-amino-acid chain; its full sequence is Probable GTP-binding protein EngB (195 aa).

The EngB-type G domain maps to glycine 22–arginine 195. Residues glycine 30–serine 37, glycine 57–threonine 61, aspartate 75–glycine 78, threonine 142–aspartate 145, and phenylalanine 174–serine 176 contribute to the GTP site. Mg(2+)-binding residues include serine 37 and threonine 59.

Belongs to the TRAFAC class TrmE-Era-EngA-EngB-Septin-like GTPase superfamily. EngB GTPase family. Mg(2+) is required as a cofactor.

Necessary for normal cell division and for the maintenance of normal septation. Its function is as follows. Binds GTP and GDP. This Bacillus subtilis (strain 168) protein is Probable GTP-binding protein EngB.